Consider the following 205-residue polypeptide: Polyamine-modulated factor 1 (205 aa).

Residues 1 to 30 (MAEASSANLGSGCEEKRHEGSSSESVPPGT) form a disordered region. The stretch at 141-193 (FLQQRDTLRRHVQKQEAENQQLADAVLAGRRQVEELQLQVQAQQQAWQALHRE) forms a coiled coil.

In terms of assembly, component of the MIS12 complex composed of MIS12, DSN1, NSL1 and PMF1. Interacts with COPS7A. Interacts via its coiled-coil domain with the leucine-zipper domain of NFE2L2. The interaction with NFE2L2 is required for the transcriptional regulation of SSAT. As to expression, highest levels of expression in heart and skeletal muscle, with significant levels expressed in kidney and liver.

It localises to the nucleus. The protein resides in the chromosome. Its subcellular location is the centromere. The protein localises to the kinetochore. Part of the MIS12 complex which is required for normal chromosome alignment and segregation and kinetochore formation during mitosis. May act as a cotranscription partner of NFE2L2 involved in regulation of polyamine-induced transcription of SSAT. The sequence is that of Polyamine-modulated factor 1 from Homo sapiens (Human).